Reading from the N-terminus, the 467-residue chain is Cysteine--tRNA ligase (467 aa).

Cys29 contacts Zn(2+). A 'HIGH' region motif is present at residues 31-41 (PTVYNYVHIGN). Cys209, His234, and Glu238 together coordinate Zn(2+). The short motif at 267–271 (KMSKS) is the 'KMSKS' region element. Residue Lys270 participates in ATP binding.

This sequence belongs to the class-I aminoacyl-tRNA synthetase family. Monomer. Requires Zn(2+) as cofactor.

Its subcellular location is the cytoplasm. The catalysed reaction is tRNA(Cys) + L-cysteine + ATP = L-cysteinyl-tRNA(Cys) + AMP + diphosphate. The sequence is that of Cysteine--tRNA ligase from Xylella fastidiosa (strain 9a5c).